A 584-amino-acid chain; its full sequence is uncharacterized protein (584 aa).

PbH1 repeat units lie at residues 100–128, 139–161, 173–195, 196–225, 236–266, 313–333, 334–356, 357–382, 406–427, 456–478, and 529–554; these read QENITISGGQIIGERDEHTYASAGIRSTH, CSNVVIDDVKISDFTGDGIIVSP, SEQIIIRRCEVRRSRRNNISITG, CDMVTVEECLIEDAGTGNGTAPKFGIDIEG, PINVSIRNNHFVGNVSSSVTNFNGYGILIEG, TSDAVIAGNLITGFSTGIDVR, GKSVLVTNNKISNFENTGILVYQ, SSDVKVDGNQIQNGLSETRRSIGLRA, GGNMIIKDNLLRKFSRGIWIAQ, NAGAIIKNNTFKEFKNYPIYCST, and SAGSIISGNTINNLSAGTATAIQTNT.

This is an uncharacterized protein from Bacillus subtilis (strain 168).